We begin with the raw amino-acid sequence, 265 residues long: MASSNLLTLALFLVLLTHANSSNDASFNVETFNKTNLILQGDATVSSEGHLLLTNVKGNEEDSMGRAFYSAPIQINDRTIDNLASFSTNFTFRINAKNIENSAYGLAFALVPVGSRPKLKGRYLGLFNTTNYDRDAHTVAVVFDTVSNRIEIDVNSIRPIATESCNFGHNNGEKAEVRITYDSPKNDLRVSLLYPSSEEKCHVSATVPLEKEVEDWVSVGFSATSGSKKETTETHNVLSWSFSSNFINFKGKKSERSNILLNKIL.

The first 21 residues, Met1 to Ser21, serve as a signal peptide directing secretion. Asn33, Asn89, and Asn128 each carry an N-linked (GlcNAc...) asparagine glycan. A disulfide bridge links Cys165 with Cys201.

The protein belongs to the leguminous lectin family. As to quaternary structure, homodimer.

Seed storage. This carbohydrate-binding lectin has toxic effects on an important bean bruchid pest, Z.subfasciatus. Antibiosis properties of legume lectins are proposed to be due to the lysis of epithelial cells of the intestine by binding to the carbohydrate moieties of these proteins. This chain is Arcelin-1 (ARC1), found in Phaseolus vulgaris (Kidney bean).